Consider the following 468-residue polypeptide: Glutamate--tRNA ligase (468 aa).

Residues 9-19 carry the 'HIGH' region motif; sequence PSPTGYLHVGG. Positions 98, 100, 125, and 127 each coordinate Zn(2+). Positions 235–239 match the 'KMSKS' region motif; that stretch reads KLSKR. Lysine 238 contacts ATP.

Belongs to the class-I aminoacyl-tRNA synthetase family. Glutamate--tRNA ligase type 1 subfamily. As to quaternary structure, monomer. It depends on Zn(2+) as a cofactor.

The protein resides in the cytoplasm. It catalyses the reaction tRNA(Glu) + L-glutamate + ATP = L-glutamyl-tRNA(Glu) + AMP + diphosphate. Its function is as follows. Catalyzes the attachment of glutamate to tRNA(Glu) in a two-step reaction: glutamate is first activated by ATP to form Glu-AMP and then transferred to the acceptor end of tRNA(Glu). This chain is Glutamate--tRNA ligase, found in Idiomarina loihiensis (strain ATCC BAA-735 / DSM 15497 / L2-TR).